We begin with the raw amino-acid sequence, 170 residues long: Vimentin A1 (170 aa).

A compositionally biased stretch (polar residues) spans 1-10 (DLTEAANKSN). Positions 1–20 (DLTEAANKSNEALRLAKQES) are disordered. Residues 1–111 (DLTEAANKSN…ATYRKLLEGE (111 aa)) are coil 2. In terms of domain architecture, IF rod spans 1 to 115 (DLTEAANKSN…KLLEGEESRI (115 aa)). A tail region spans residues 112-170 (ESRISTPLPNFSSFNLRETMLELKPNIESTFTKKVLIKTIETRDGQVLNESTQNHDDLE).

Belongs to the intermediate filament family. Homomer. In terms of processing, one of the most prominent phosphoproteins in various cells of mesenchymal origin. Phosphorylation is enhanced during cell division, at which time vimentin filaments are significantly reorganized. As to expression, expressed in low amounts in retina, optic nerve, and brain and in higher amounts in spinal cord.

Its function is as follows. Vimentins are class-III intermediate filaments found in various non-epithelial cells, especially mesenchymal cells. Vimentin is attached to the nucleus, endoplasmic reticulum, and mitochondria, either laterally or terminally. The sequence is that of Vimentin A1 from Carassius auratus (Goldfish).